A 952-amino-acid polypeptide reads, in one-letter code: Ubiquitin carboxyl-terminal hydrolase 15 (952 aa).

Ala2 bears the N-acetylalanine mark. Residues 2–223 (AEGGAADLDI…KNEDGTWPRG (222 aa)) are mediates interaction with SART3. One can recognise a DUSP domain in the interval 7 to 118 (ADLDIQRSDI…GQEPIARKVV (112 aa)). Thr226 is subject to Phosphothreonine. The USP domain occupies 260–904 (CGLSNLGNTC…AAYVLFYQRQ (645 aa)). Residue Cys269 is the Nucleophile of the active site. Residue Thr573 is modified to Phosphothreonine. Residues 598–666 (TEGSLHCCKD…GDNDSENGLC (69 aa)) form a disordered region. The segment covering 627-644 (METDEPDDESSQDQELPS) has biased composition (acidic residues). His862 acts as the Proton acceptor in catalysis. Residues 923–952 (SAATGIPLESDEDSNDNDNDIENENCMHTN) form a disordered region. Acidic residues predominate over residues 931–945 (ESDEDSNDNDNDIEN). 2 positions are modified to phosphoserine: Ser932 and Ser936.

It belongs to the peptidase C19 family. A homodimer structure has been reported; however it is unclear whether the protein form a homodimer in vivo. Identified in a complex with the COP9 signalosome complex (CSN). Interacts with SMAD1, SMAD2 and SMAD3; the interaction is direct. Forms a complex with SMURF2 and SMAD7. Interacts with TGFBR1. Interacts with SART3; the interaction is direct. May interact with RNF20 and RNF40. May interact with PRKN. Interacts with INCA1. In terms of processing, phosphorylated. Phosphorylation protects against ubiquitination and subsequent degradation by the proteasome. Ubiquitinated, leading to degradation by the proteasome.

The protein resides in the cytoplasm. Its subcellular location is the nucleus. It localises to the mitochondrion. The enzyme catalyses Thiol-dependent hydrolysis of ester, thioester, amide, peptide and isopeptide bonds formed by the C-terminal Gly of ubiquitin (a 76-residue protein attached to proteins as an intracellular targeting signal).. Its function is as follows. Hydrolase that removes conjugated ubiquitin from target proteins and regulates various pathways such as the TGF-beta receptor signaling, NF-kappa-B and RNF41/NRDP1-PRKN pathways. Acts as a key regulator of TGF-beta receptor signaling pathway, but the precise mechanism is still unclear: according to a report, acts by promoting deubiquitination of monoubiquitinated R-SMADs (SMAD1, SMAD2 and/or SMAD3), thereby alleviating inhibition of R-SMADs and promoting activation of TGF-beta target genes. According to another reports, regulates the TGF-beta receptor signaling pathway by mediating deubiquitination and stabilization of TGFBR1, leading to an enhanced TGF-beta signal. Able to mediate deubiquitination of monoubiquitinated substrates, 'Lys-27'-, 'Lys-48'- and 'Lys-63'-linked polyubiquitin chains. May also regulate gene expression and/or DNA repair through the deubiquitination of histone H2B. Acts as an inhibitor of mitophagy by counteracting the action of parkin (PRKN): hydrolyzes cleavage of 'Lys-48'- and 'Lys-63'-linked polyubiquitin chains attached by parkin on target proteins such as MFN2, thereby reducing parkin's ability to drive mitophagy. Acts as an associated component of COP9 signalosome complex (CSN) and regulates different pathways via this association: regulates NF-kappa-B by mediating deubiquitination of NFKBIA and deubiquitinates substrates bound to VCP. Involved in endosome organization by mediating deubiquitination of SQSTM1: ubiquitinated SQSTM1 forms a molecular bridge that restrains cognate vesicles in the perinuclear region and its deubiquitination releases target vesicles for fast transport into the cell periphery. Acts as a negative regulator of antifungal immunity by mediating 'Lys-27'-linked deubiquitination of CARD9, thereby inactivating CARD9. This Bos taurus (Bovine) protein is Ubiquitin carboxyl-terminal hydrolase 15 (USP15).